The primary structure comprises 896 residues: Rho GTPase-activating protein gacM (896 aa).

Residues 1–97 (MSSFIGWKKN…SSNDTIGKSS (97 aa)) are disordered. Over residues 10-26 (NSNSGGTPGASPTSSSP) the composition is skewed to low complexity. Over residues 27–38 (LNSTISNANSVS) the composition is skewed to polar residues. Low complexity-rich tracts occupy residues 45–57 (SISNTSSSSLSSS) and 65–97 (NSNNNSPPLSSSSSSTSTYSTPNSSNDTIGKSS). The region spanning 139–330 (QPINPNTEFG…LWIEEFDMIS (192 aa)) is the Rho-GAP domain. Composition is skewed to low complexity over residues 375–391 (IQQQLQQQQQQQQQSHP), 400–427 (SSLSSSSLQVNLQTSPKSPQSPKLLLPT), 448–460 (PTPTTTPTLTPQT), and 473–506 (NNNSNNNNNNNNNNSNNNNNNNNNNNNNNNNNNN). 2 disordered regions span residues 375 to 514 (IQQQ…GSPL) and 701 to 770 (LPTG…ENQI). Polar residues predominate over residues 702 to 711 (PTGSSWSDFE). Composition is skewed to low complexity over residues 712 to 743 (NNSSNNNININNNINNSSSNNNNNNSSPNSSP) and 751 to 761 (SNGLNSSSNSN).

It localises to the cytoplasm. Its function is as follows. Rho GTPase-activating protein involved in the signal transduction pathway. The sequence is that of Rho GTPase-activating protein gacM (gacM) from Dictyostelium discoideum (Social amoeba).